We begin with the raw amino-acid sequence, 507 residues long: ATP synthase subunit alpha, mitochondrial (507 aa).

171–178 contacts ATP; sequence GDRQTGKT.

It belongs to the ATPase alpha/beta chains family. In terms of assembly, F-type ATPases have 2 components, CF(1) - the catalytic core - and CF(0) - the membrane proton channel. CF(1) has five subunits: alpha(3), beta(3), gamma(1), delta(1), epsilon(1). CF(0) has three main subunits: a, b and c.

The protein resides in the mitochondrion. It is found in the mitochondrion inner membrane. Functionally, mitochondrial membrane ATP synthase (F(1)F(0) ATP synthase or Complex V) produces ATP from ADP in the presence of a proton gradient across the membrane which is generated by electron transport complexes of the respiratory chain. F-type ATPases consist of two structural domains, F(1) - containing the extramembraneous catalytic core, and F(0) - containing the membrane proton channel, linked together by a central stalk and a peripheral stalk. During catalysis, ATP synthesis in the catalytic domain of F(1) is coupled via a rotary mechanism of the central stalk subunits to proton translocation. Subunits alpha and beta form the catalytic core in F(1). Rotation of the central stalk against the surrounding alpha(3)beta(3) subunits leads to hydrolysis of ATP in three separate catalytic sites on the beta subunits. Subunit alpha does not bear the catalytic high-affinity ATP-binding sites. This chain is ATP synthase subunit alpha, mitochondrial (ATPA), found in Arabidopsis thaliana (Mouse-ear cress).